Consider the following 71-residue polypeptide: uncharacterized protein (71 aa).

A signal peptide spans 1-19; the sequence is MFLFPSLLSSFCITLRSIS.

This is an uncharacterized protein from Pasteurella multocida (strain Pm70).